We begin with the raw amino-acid sequence, 93 residues long: Pyrimidine/purine nucleoside phosphorylase (93 aa).

It belongs to the nucleoside phosphorylase PpnP family.

The catalysed reaction is a purine D-ribonucleoside + phosphate = a purine nucleobase + alpha-D-ribose 1-phosphate. The enzyme catalyses adenosine + phosphate = alpha-D-ribose 1-phosphate + adenine. It catalyses the reaction cytidine + phosphate = cytosine + alpha-D-ribose 1-phosphate. It carries out the reaction guanosine + phosphate = alpha-D-ribose 1-phosphate + guanine. The catalysed reaction is inosine + phosphate = alpha-D-ribose 1-phosphate + hypoxanthine. The enzyme catalyses thymidine + phosphate = 2-deoxy-alpha-D-ribose 1-phosphate + thymine. It catalyses the reaction uridine + phosphate = alpha-D-ribose 1-phosphate + uracil. It carries out the reaction xanthosine + phosphate = alpha-D-ribose 1-phosphate + xanthine. Catalyzes the phosphorolysis of diverse nucleosides, yielding D-ribose 1-phosphate and the respective free bases. Can use uridine, adenosine, guanosine, cytidine, thymidine, inosine and xanthosine as substrates. Also catalyzes the reverse reactions. This is Pyrimidine/purine nucleoside phosphorylase from Pseudoalteromonas atlantica (strain T6c / ATCC BAA-1087).